Here is a 239-residue protein sequence, read N- to C-terminus: Ubiquinone biosynthesis O-methyltransferase (239 aa).

Arg45, Gly64, Asp85, and Met129 together coordinate S-adenosyl-L-methionine.

Belongs to the methyltransferase superfamily. UbiG/COQ3 family.

The catalysed reaction is a 3-demethylubiquinol + S-adenosyl-L-methionine = a ubiquinol + S-adenosyl-L-homocysteine + H(+). It carries out the reaction a 3-(all-trans-polyprenyl)benzene-1,2-diol + S-adenosyl-L-methionine = a 2-methoxy-6-(all-trans-polyprenyl)phenol + S-adenosyl-L-homocysteine + H(+). It participates in cofactor biosynthesis; ubiquinone biosynthesis. In terms of biological role, O-methyltransferase that catalyzes the 2 O-methylation steps in the ubiquinone biosynthetic pathway. This Nitrosospira multiformis (strain ATCC 25196 / NCIMB 11849 / C 71) protein is Ubiquinone biosynthesis O-methyltransferase.